The sequence spans 988 residues: MAAQKKYICAFCARAFTRSEHKQRHERSHTNEKPFHCLHCTSSFVRRDLLQRHCRTVHHTNLNPSTLPSNKSLKNPTTNPLDLSNNEGTTTTTKTGNRKNNSNKNGAKNDKSTNPNPAVSNDDNRSSVGDITTQLPFQVQFNTQLPYQQQQQQQQQQQYPILQNQGIPMKQSFSMESDQHSLTTFDSPTSSLGVSMTPSGSTNSEIVLQQQQQTTKRRKRSQENNSNNNTKLIAKELNHDLVHLLSITKKLTTLLQHYDNVKVNITDSFLIGYVHIQQQAKNFTIFEKILKDLVYYLNTYHINNLQQQNQFPPSQQQNHYTINHFKIGISYCVIALGFLIDHKPNRAIQFFKKSWNLLIKTLIPQYNSNNNLLDQIEILYNLFLLCYIYLQFNLETFDINEKQHEHHSYEQGDEHEDHHQEQVYINNQVILNYLNDISFIIASNLKDVATNNLIDHNLNLFWNIYILLSSYITKEPPKIHQILLNKNLKQNDTLVSLMQKFSKSFINMDMDDEQLKLVVVAALNNELKLYFNDTVDEFEPENSKNKRKFIYDNRNVLHNAIILINKSINFYNPSASLVNDAKMFELKLFELFKKNLIINSPMKYHELFNNYIFIPQHYYHWQLLTLTLKEINQNNVIFNQIHSILTTTTGSNVCFSFIDFENLLKNSFLNYKANPIVINNNLLIISYPIIILSNYLNLDNLMTSMGQMNQLQFINLNIFIIEWYLIMMKVLIIIWDDTLIDFEDNYILQTLMYILLDNKSCLLKRLNIDTSKLEYDVNCERLSFNQKWFWIIKLKFDSIFENWMNFLKNKNNNVTNNSNVTNTSTTGITNTNHNHNDSYLHHFNVNVSNFKFNLNKYLNEYFVTGDFKFREQLDQNDPDQFQGSMSMDEEPDFTTAMQTSQTINSFMPIHNHNSRNQVYQQHNQDTPMTSRRDSTNINENNIAQTSSFISNSNYQGSNSNNMINYNEFQDRNYKRSSSITLGILAQTV.

2 C2H2-type zinc fingers span residues 7 to 29 (YICAFCARAFTRSEHKQRHERSH) and 35 to 59 (FHCLHCTSSFVRRDLLQRHCRTVHH). The segment covering 59-83 (HTNLNPSTLPSNKSLKNPTTNPLDL) has biased composition (polar residues). Disordered stretches follow at residues 59–129 (HTNL…SSVG) and 174–229 (SMES…SNNN). The segment covering 84-106 (SNNEGTTTTTKTGNRKNNSNKNG) has biased composition (low complexity). 2 stretches are compositionally biased toward polar residues: residues 113-129 (TNPNPAVSNDDNRSSVG) and 174-208 (SMESDQHSLTTFDSPTSSLGVSMTPSGSTNSEIVL).

It is found in the nucleus. In terms of biological role, transcription factor required for yeast cell adherence to silicone substrate. In Candida albicans (strain SC5314 / ATCC MYA-2876) (Yeast), this protein is Transcriptional regulator of yeast form adherence 5 (TRY5).